The sequence spans 247 residues: Carboxy-S-adenosyl-L-methionine synthase (247 aa).

Residues Tyr-39, 64–66 (GCS), 117–118 (DI), Asn-132, and Arg-199 each bind S-adenosyl-L-methionine.

Belongs to the class I-like SAM-binding methyltransferase superfamily. Cx-SAM synthase family. As to quaternary structure, homodimer.

It carries out the reaction prephenate + S-adenosyl-L-methionine = carboxy-S-adenosyl-L-methionine + 3-phenylpyruvate + H2O. In terms of biological role, catalyzes the conversion of S-adenosyl-L-methionine (SAM) to carboxy-S-adenosyl-L-methionine (Cx-SAM). The protein is Carboxy-S-adenosyl-L-methionine synthase of Aeromonas salmonicida (strain A449).